The sequence spans 393 residues: Endoglucanase 1 (393 aa).

Residues 1–26 form the signal peptide; that stretch reads MAFKLNIGLLALSLSLSLVHLDGVRA. The active-site Nucleophile is the Asp34. Catalysis depends on Asp152, which acts as the Proton donor. Residues 233-393 form a disordered region; that stretch reads GCQRKDDNTI…GGHKKCHKKH (161 aa). 2 stretches are compositionally biased toward low complexity: residues 319-329 and 337-370; these read QGSSNGDATTG and DSGS…NPGA. An N-linked (GlcNAc...) asparagine glycan is attached at Asn343. Residues 371-384 are compositionally biased toward gly residues; the sequence is AQGGQGGAQPGPSG.

It belongs to the glycosyl hydrolase 45 (cellulase K) family. In terms of processing, may also be O-glycosylated. In terms of tissue distribution, hyphal tip.

The protein localises to the secreted. The enzyme catalyses Endohydrolysis of (1-&gt;4)-beta-D-glucosidic linkages in cellulose, lichenin and cereal beta-D-glucans.. This Mycosarcoma maydis (Corn smut fungus) protein is Endoglucanase 1 (EGL1).